The chain runs to 99 residues: MSGISSKGLEELKNNGWLILEDGKKIKKEFKFKDFKQSIDFLKDIQPSADALDHHPDVCIYYNRVIVELTTHDMGGLTDLDYKLAIKIDELYKMKTSNL.

Belongs to the pterin-4-alpha-carbinolamine dehydratase family.

The enzyme catalyses (4aS,6R)-4a-hydroxy-L-erythro-5,6,7,8-tetrahydrobiopterin = (6R)-L-erythro-6,7-dihydrobiopterin + H2O. In Saccharolobus islandicus (strain M.16.27) (Sulfolobus islandicus), this protein is Putative pterin-4-alpha-carbinolamine dehydratase.